A 651-amino-acid polypeptide reads, in one-letter code: MMNQSQRMAPVGSDKELSDLLDFSMMFPLPVANGKSRPASLGGTQFAGSGLEDRPSSGSWGSSDQNSSSFDPSRTYSEGAHFSDSHSSLPPSTFLGAGLGGKGSERNAYATFGRDTSVGTLSQAGFLPGELSLSSPGPLSPSGIKSSSQYYPSFPSNPRRRAADGGLDTQPKKVRKVPPGLPSSVYPPSSGDSYSRDAAAYPSAKTPSSAYPSPFYVADGSLHPSAELWSTPSQVGFGPMLGDGSSPLPLAPGSSSVGSGTFGGLQQQDRMGYQLHGSEVNGSLPAVSSFSAAPGTYSGTSGHTPPVSGAAAESLLGTRGTTASSSGDALGKALASIYSPDHSSNNFSPSPSTPVGSPQGLPGTSQWPRAGAPSALSPNYDAGLHGLSKMEDRLDEAIHVLRSHAVGTASDLHGLLPGHGALTTSFTGPMSLGGRHAGLVGGSHPEEGLTSGASLLHNHASLPSQPSSLPDLSQRPPDSYSGLGRAGTTAGASEIKREEKEDEEIASVADAEEDKKDLKVPRTRTSPDEDEDDLLPPEQKAEREKERRVANNARERLRVRDINEAFKELGRMCQLHLSSEKPQTKLLILHQAVAVILSLEQQVRERNLNPKAACLKRREEEKVSGVVGDPQLALSAAHPGLGEAHNPAGHL.

3 disordered regions span residues 32–107 (ANGK…SERN), 131–208 (LSLS…KTPS), and 341–378 (DHSSNNFSPSPSTPVGSPQGLPGTSQWPRAGAPSALSP). Low complexity-rich tracts occupy residues 56–73 (SSGSWGSSDQNSSSFDPS), 131–148 (LSLSSPGPLSPSGIKSSS), and 341–354 (DHSSNNFSPSPSTP). Phosphoserine occurs at positions 135 and 140. Residue Thr-353 is modified to Phosphothreonine. Ser-357 bears the Phosphoserine mark. The residue at position 369 (Arg-369) is an Omega-N-methylarginine. Ser-377 is subject to Phosphoserine. The leucine-zipper stretch occupies residues 387–422 (LSKMEDRLDEAIHVLRSHAVGTASDLHGLLPGHGAL). The disordered stretch occupies residues 457–549 (HNHASLPSQP…KAEREKERRV (93 aa)). The segment covering 461 to 479 (SLPSQPSSLPDLSQRPPDS) has biased composition (low complexity). Lys-496 participates in a covalent cross-link: Glycyl lysine isopeptide (Lys-Gly) (interchain with G-Cter in SUMO2). At Ser-526 the chain carries Phosphoserine. Asp-528 carries the post-translational modification Phosphothreonine. A Phosphoserine modification is found at Asp-533. Over residues 539–549 (QKAEREKERRV) the composition is skewed to basic and acidic residues. One can recognise a bHLH domain in the interval 546-599 (ERRVANNARERLRVRDINEAFKELGRMCQLHLSSEKPQTKLLILHQAVAVILSL). Residue Lys-622 forms a Glycyl lysine isopeptide (Lys-Gly) (interchain with G-Cter in SUMO2) linkage.

In terms of assembly, homodimer. Heterodimer; efficient DNA binding requires dimerization with another bHLH protein. Forms a heterodimer with TWIST1 and TWIST2. Forms a heterodimer with NEUROD1; the heterodimer is inhibited in presence of ID2, but not NR0B2, to E-box element. Forms a heterodimer with TCF15; the heterodimer binds E-box element. Forms a heterodimer with MYOG; heterodimerization enhances MYOG DNA-binding and transcriptional activities. Forms a heterodimer with ATOH8; repress transcription of TCF3 and TCF3-NEUROG3 dimer-induced transactivation of E box-dependent promoters. Component of a nuclear TAL-1 complex composed at least of CBFA2T3, LDB1, TAL1 and TCF3. Interacts with NEUROD2. Interacts with EP300. Interacts with PTF1A, TGFB1I1 and UBE2I. Interacts with BHLHA9. Interacts with ASB2; the interaction is mediated by SKP2 and targets TCF3 for Notch-induced proteasomal degradation. Interacts with transcription factor ASCL5/AmeloD. Forms a heterodimer with ATOH7; required for ATOH7 DNA-binding. As to quaternary structure, interacts with RALGAPA1. Interacts with FIGLA. In terms of processing, phosphorylated following NGF stimulation. Post-translationally, undergoes Notch-induced ubiquitination and subsequent proteasomal degradation which is mediated by ASB1 or ASB2, the substrate-recognition components of probable ECS E3 ubiquitin-protein ligase complexes.

It localises to the nucleus. Transcriptional regulator involved in the initiation of neuronal differentiation and mesenchymal to epithelial transition. Heterodimers between TCF3 and tissue-specific basic helix-loop-helix (bHLH) proteins play major roles in determining tissue-specific cell fate during embryogenesis, like muscle or early B-cell differentiation. Together with TCF15, required for the mesenchymal to epithelial transition. Dimers bind DNA on E-box motifs: 5'-CANNTG-3'. Binds to the kappa-E2 site in the kappa immunoglobulin gene enhancer. Binds to IEB1 and IEB2, which are short DNA sequences in the insulin gene transcription control region. Functionally, facilitates ATOH7 binding to DNA at the consensus sequence 5'-CAGGTG-3', and positively regulates transcriptional activity. This Mus musculus (Mouse) protein is Transcription factor E2-alpha (Tcf3).